We begin with the raw amino-acid sequence, 82 residues long: Delta-ctenitoxin-Pn1a (82 aa).

The first 16 residues, 1-16, serve as a signal peptide directing secretion; the sequence is MKVAIVFLSLLVLAFA. Residues 17-34 constitute a propeptide that is removed on maturation; the sequence is SESIEENREEFPVEESAR. 5 cysteine pairs are disulfide-bonded: C35-C49, C42-C55, C46-C82, C48-C65, and C57-C63.

This sequence belongs to the neurotoxin 03 (Tx2) family. 05 subfamily. Expressed by the venom gland.

It localises to the secreted. Functionally, this neurotoxin binds at site 3 of insect voltage-activated sodium channels (Nav) and prolongs evoked axonal action potentials by a slowing down of sodium current inactivation. The toxin also inhibits glutamate uptake from rat brain synaptosomes. It reversibly inhibits the N-methyl-D-aspartate (NMDA)-subtype of ionotropic glutamate receptor (GRIN). In addition, the toxin shows antinociceptive effect in all rat pain models tested (inflammatory, neuropathic and nociceptive). The antinociceptive effect is partially blocked when selective antagonists of both mu- and delta-opioid receptors are administered, revealing that the antinociceptive effect of the toxin involves both opioid and cannabinoid endogenous systems. In vivo, it is highly toxic to house fly (Musca domestica), toxic to cockroach, but has no effect when intracerebroventricularly injected into mice. The polypeptide is Delta-ctenitoxin-Pn1a (Phoneutria nigriventer (Brazilian armed spider)).